A 97-amino-acid chain; its full sequence is Large ribosomal subunit protein bL27 (97 aa).

Positions 1-21 (MAHKKGVGSSRNGRDSNPKYR) are disordered.

The protein belongs to the bacterial ribosomal protein bL27 family.

In Gemmatimonas aurantiaca (strain DSM 14586 / JCM 11422 / NBRC 100505 / T-27), this protein is Large ribosomal subunit protein bL27.